Reading from the N-terminus, the 134-residue chain is ATP synthase epsilon chain, chloroplastic (134 aa).

It belongs to the ATPase epsilon chain family. As to quaternary structure, F-type ATPases have 2 components, CF(1) - the catalytic core - and CF(0) - the membrane proton channel. CF(1) has five subunits: alpha(3), beta(3), gamma(1), delta(1), epsilon(1). CF(0) has three main subunits: a, b and c.

It is found in the plastid. It localises to the chloroplast thylakoid membrane. Produces ATP from ADP in the presence of a proton gradient across the membrane. This Liriodendron tulipifera (Tuliptree) protein is ATP synthase epsilon chain, chloroplastic.